We begin with the raw amino-acid sequence, 193 residues long: ATP-dependent Clp protease proteolytic subunit (193 aa).

The active-site Nucleophile is the Ser-98. His-123 is an active-site residue.

Belongs to the peptidase S14 family. Fourteen ClpP subunits assemble into 2 heptameric rings which stack back to back to give a disk-like structure with a central cavity, resembling the structure of eukaryotic proteasomes.

It is found in the cytoplasm. It catalyses the reaction Hydrolysis of proteins to small peptides in the presence of ATP and magnesium. alpha-casein is the usual test substrate. In the absence of ATP, only oligopeptides shorter than five residues are hydrolyzed (such as succinyl-Leu-Tyr-|-NHMec, and Leu-Tyr-Leu-|-Tyr-Trp, in which cleavage of the -Tyr-|-Leu- and -Tyr-|-Trp bonds also occurs).. Cleaves peptides in various proteins in a process that requires ATP hydrolysis. Has a chymotrypsin-like activity. Plays a major role in the degradation of misfolded proteins. ClpXP is involved in the complete degradation of the Site-2 clipped anti-sigma-W factor RsiW. This results in the release of SigW and the transcription activation of the genes under the control of the sigma-W factor. The protein is ATP-dependent Clp protease proteolytic subunit of Oceanobacillus iheyensis (strain DSM 14371 / CIP 107618 / JCM 11309 / KCTC 3954 / HTE831).